The sequence spans 144 residues: Putative pre-16S rRNA nuclease (144 aa).

It belongs to the YqgF nuclease family.

The protein localises to the cytoplasm. In terms of biological role, could be a nuclease involved in processing of the 5'-end of pre-16S rRNA. In Pseudomonas paraeruginosa (strain DSM 24068 / PA7) (Pseudomonas aeruginosa (strain PA7)), this protein is Putative pre-16S rRNA nuclease.